A 71-amino-acid polypeptide reads, in one-letter code: Cold shock-like protein CspB (71 aa).

The 61-residue stretch at 7-67 (GLVKWFNADK…GAKGPAAANV (61 aa)) folds into the CSD domain.

Its subcellular location is the cytoplasm. This is Cold shock-like protein CspB (cspB) from Escherichia coli (strain K12).